The primary structure comprises 394 residues: Muscle cell intermediate filament protein AV71 (394 aa).

The interval 1 to 73 is coil 1B; that stretch reads AEINLVRRRV…RVHDQEITEL (73 aa). The IF rod domain occupies 1-239; sequence AEINLVRRRV…KMLEGEENRA (239 aa). Positions 74–91 are linker 12; the sequence is QAMAARDTTPENREYFKN. Residues 92-239 are coil 2; it reads ELSSAIRDIR…KMLEGEENRA (148 aa). Residues 240–394 are tail; the sequence is GLRQLVEQVV…HIQRSSHTIN (155 aa). Positions 272-389 constitute an LTD domain; sequence SRTSFQRSAK…EERASHIQRS (118 aa).

It belongs to the intermediate filament family.

In Acanthocheilonema viteae (Filarial nematode worm), this protein is Muscle cell intermediate filament protein AV71 (AV71).